The sequence spans 266 residues: 3-methyl-2-oxobutanoate hydroxymethyltransferase (266 aa).

Positions 45 and 84 each coordinate Mg(2+). Residues 45 to 46, Asp84, and Lys112 contribute to the 3-methyl-2-oxobutanoate site; that span reads DS. Residue Glu114 coordinates Mg(2+). The active-site Proton acceptor is the Glu181.

The protein belongs to the PanB family. In terms of assembly, homodecamer; pentamer of dimers. It depends on Mg(2+) as a cofactor.

It is found in the cytoplasm. The catalysed reaction is 3-methyl-2-oxobutanoate + (6R)-5,10-methylene-5,6,7,8-tetrahydrofolate + H2O = 2-dehydropantoate + (6S)-5,6,7,8-tetrahydrofolate. Its pathway is cofactor biosynthesis; (R)-pantothenate biosynthesis; (R)-pantoate from 3-methyl-2-oxobutanoate: step 1/2. Catalyzes the reversible reaction in which hydroxymethyl group from 5,10-methylenetetrahydrofolate is transferred onto alpha-ketoisovalerate to form ketopantoate. This chain is 3-methyl-2-oxobutanoate hydroxymethyltransferase, found in Pseudomonas fluorescens (strain SBW25).